Here is an 858-residue protein sequence, read N- to C-terminus: Leucine--tRNA ligase (858 aa).

Residues 43-54 (PYPSGDGLHVGH) carry the 'HIGH' region motif. The 'KMSKS' region motif lies at 629–633 (KMSKS). An ATP-binding site is contributed by K632.

The protein belongs to the class-I aminoacyl-tRNA synthetase family.

Its subcellular location is the cytoplasm. It carries out the reaction tRNA(Leu) + L-leucine + ATP = L-leucyl-tRNA(Leu) + AMP + diphosphate. The polypeptide is Leucine--tRNA ligase (Treponema denticola (strain ATCC 35405 / DSM 14222 / CIP 103919 / JCM 8153 / KCTC 15104)).